A 249-amino-acid chain; its full sequence is Methyl-coenzyme M reductase I subunit gamma (249 aa).

Position 120 (R120) interacts with coenzyme M.

This sequence belongs to the methyl-coenzyme M reductase gamma subunit family. As to quaternary structure, MCR is a hexamer of two alpha, two beta, and two gamma chains, forming a dimer of heterotrimers. The cofactor is coenzyme F430.

It is found in the cytoplasm. The catalysed reaction is coenzyme B + methyl-coenzyme M = methane + coenzyme M-coenzyme B heterodisulfide. It participates in one-carbon metabolism; methyl-coenzyme M reduction; methane from methyl-coenzyme M: step 1/1. Component of the methyl-coenzyme M reductase (MCR) I that catalyzes the reductive cleavage of methyl-coenzyme M (CoM-S-CH3 or 2-(methylthio)ethanesulfonate) using coenzyme B (CoB or 7-mercaptoheptanoylthreonine phosphate) as reductant which results in the production of methane and the mixed heterodisulfide of CoB and CoM (CoM-S-S-CoB). This is the final step in methanogenesis. This is Methyl-coenzyme M reductase I subunit gamma (mcrG) from Methanothermobacter thermautotrophicus (strain ATCC 29096 / DSM 1053 / JCM 10044 / NBRC 100330 / Delta H) (Methanobacterium thermoautotrophicum).